We begin with the raw amino-acid sequence, 347 residues long: GMP reductase (347 aa).

An NADP(+)-binding site is contributed by 108–131 (ADFEKTQQILSQNPQLNFVCIDVA). Positions 181 and 183 each coordinate K(+). C186 (thioimidate intermediate) is an active-site residue. 216–239 (IISDGGCTMPGDVAKAFGGGADFV) is an NADP(+) binding site.

Belongs to the IMPDH/GMPR family. GuaC type 1 subfamily. In terms of assembly, homotetramer.

The catalysed reaction is IMP + NH4(+) + NADP(+) = GMP + NADPH + 2 H(+). Its function is as follows. Catalyzes the irreversible NADPH-dependent deamination of GMP to IMP. It functions in the conversion of nucleobase, nucleoside and nucleotide derivatives of G to A nucleotides, and in maintaining the intracellular balance of A and G nucleotides. This Klebsiella pneumoniae subsp. pneumoniae (strain ATCC 700721 / MGH 78578) protein is GMP reductase.